Here is a 430-residue protein sequence, read N- to C-terminus: Tyrosine--tRNA ligase (430 aa).

Residue tyrosine 36 coordinates L-tyrosine. Positions 41-50 match the 'HIGH' region motif; sequence PTASSLHVGS. 2 residues coordinate L-tyrosine: tyrosine 170 and glutamine 174. A 'KMSKS' region motif is present at residues 230–234; the sequence is KMGKT. Lysine 233 is an ATP binding site. The 66-residue stretch at 362–427 folds into the S4 RNA-binding domain; that stretch reads VPAFELFDEI…GKKNYHRLVL (66 aa).

The protein belongs to the class-I aminoacyl-tRNA synthetase family. TyrS type 1 subfamily. In terms of assembly, homodimer.

It localises to the cytoplasm. It catalyses the reaction tRNA(Tyr) + L-tyrosine + ATP = L-tyrosyl-tRNA(Tyr) + AMP + diphosphate + H(+). In terms of biological role, catalyzes the attachment of tyrosine to tRNA(Tyr) in a two-step reaction: tyrosine is first activated by ATP to form Tyr-AMP and then transferred to the acceptor end of tRNA(Tyr). The polypeptide is Tyrosine--tRNA ligase (Desulfatibacillum aliphaticivorans).